A 288-amino-acid chain; its full sequence is ATP synthase gamma chain (288 aa).

This sequence belongs to the ATPase gamma chain family. As to quaternary structure, F-type ATPases have 2 components, CF(1) - the catalytic core - and CF(0) - the membrane proton channel. CF(1) has five subunits: alpha(3), beta(3), gamma(1), delta(1), epsilon(1). CF(0) has three main subunits: a, b and c.

It is found in the cell inner membrane. In terms of biological role, produces ATP from ADP in the presence of a proton gradient across the membrane. The gamma chain is believed to be important in regulating ATPase activity and the flow of protons through the CF(0) complex. The chain is ATP synthase gamma chain from Vibrio cholerae serotype O1 (strain ATCC 39541 / Classical Ogawa 395 / O395).